The chain runs to 373 residues: Transmembrane protein adipocyte-associated 1 (373 aa).

Residues N11 and N23 are each glycosylated (N-linked (GlcNAc...) asparagine). 7 consecutive transmembrane segments (helical) span residues 48–68, 76–96, 123–143, 151–171, 192–212, 234–254, and 265–285; these read LLLL…LPSA, SSPI…VGIA, FFLL…GHLE, VLAI…TLEI, QFWL…VILP, ILAL…FDII, and FLYF…GFFG. An N-linked (GlcNAc...) asparagine glycan is attached at N361.

Belongs to the UPF0359 family. As to expression, ubiquitous, with higher levels in heart, placenta and kidney.

The protein resides in the membrane. The protein is Transmembrane protein adipocyte-associated 1 (TPRA1) of Homo sapiens (Human).